The following is a 42-amino-acid chain: Profilin (42 aa).

This sequence belongs to the profilin family. Occurs in many kinds of cells as a complex with monomeric actin in a 1:1 ratio.

Its subcellular location is the cytoplasm. It is found in the cytoskeleton. Functionally, binds to actin and affects the structure of the cytoskeleton. At high concentrations, profilin prevents the polymerization of actin, whereas it enhances it at low concentrations. In Plantago lanceolata (English plantain), this protein is Profilin.